The primary structure comprises 97 residues: Co-chaperonin GroES (97 aa).

Belongs to the GroES chaperonin family. In terms of assembly, heptamer of 7 subunits arranged in a ring. Interacts with the chaperonin GroEL.

It localises to the cytoplasm. Together with the chaperonin GroEL, plays an essential role in assisting protein folding. The GroEL-GroES system forms a nano-cage that allows encapsulation of the non-native substrate proteins and provides a physical environment optimized to promote and accelerate protein folding. GroES binds to the apical surface of the GroEL ring, thereby capping the opening of the GroEL channel. The sequence is that of Co-chaperonin GroES from Buchnera aphidicola subsp. Pterocomma populeum.